We begin with the raw amino-acid sequence, 310 residues long: Isoflavone reductase homolog A622-like (310 aa).

NADP(+) is bound by residues G13 to G19, R38, and K47. K135 (proton acceptor) is an active-site residue. R139 contributes to the NADP(+) binding site.

Belongs to the NmrA-type oxidoreductase family. Isoflavone reductase subfamily. Monomer. Expressed in roots.

The protein localises to the cytoplasm. It functions in the pathway alkaloid biosynthesis; nicotine biosynthesis. In terms of biological role, involved in the biosynthesis of pyridine alkaloid natural products, leading mainly to the production of anabasine, anatabine, nicotine and nornicotine, effective deterrents against herbivores with antiparasitic and pesticide properties (neurotoxins); nornicotine serves as the precursor in the synthesis of the carcinogen compound N'-nitrosonornicotine (NNN). Reductase that may be involved in a late step of tobacco alkaloid biosynthesis. Maybe involved in either the formation of a nicotinic acid-derived precursor or the final condensation reaction of tobacco alkaloids. The polypeptide is Isoflavone reductase homolog A622-like (Nicotiana tabacum (Common tobacco)).